The chain runs to 59 residues: Large ribosomal subunit protein uL30 (59 aa).

It belongs to the universal ribosomal protein uL30 family. In terms of assembly, part of the 50S ribosomal subunit.

The polypeptide is Large ribosomal subunit protein uL30 (Aliivibrio fischeri (strain MJ11) (Vibrio fischeri)).